The sequence spans 85 residues: UPF0410 protein YdaS (85 aa).

A run of 3 helical transmembrane segments spans residues L2–V22, G28–L48, and F58–F78.

It belongs to the UPF0410 family.

The protein resides in the cell membrane. In Bacillus subtilis (strain 168), this protein is UPF0410 protein YdaS (ydaS).